A 199-amino-acid polypeptide reads, in one-letter code: MIRFILDTSIFVNPDVRKKFGNTPTEAMKTFLKYAEKLFGKVEFYMPPGIYKEVKNFLEDIPPEMELYIIKKPPNVHDIKIPAFVVYELIEDIRRRVDKGLRVAEKAVRESVIDTNNVDKIIQKLRRNYRKALREGIVDSTEDFELILLAKEIDGIIVSADVGILTWAEKMGIKWVDAFKFKELLDELVEKVESEKERK.

Belongs to the HARP family.

It catalyses the reaction Endonucleolytic cleavage of RNA, removing 5'-extranucleotides from tRNA precursor.. Its function is as follows. RNA-free RNase P that catalyzes the removal of the 5'-leader sequence from pre-tRNA to produce the mature 5'-terminus. This chain is RNA-free ribonuclease P, found in Pyrococcus furiosus (strain ATCC 43587 / DSM 3638 / JCM 8422 / Vc1).